A 1052-amino-acid polypeptide reads, in one-letter code: 3-hydroxy-3-methylglutaryl coenzyme A reductase mokG (1052 aa).

6 helical membrane-spanning segments follow: residues 223-243 (VDMA…VSLF), 253-273 (FWLA…GLGV), 279-299 (VPVD…TVGF), 349-369 (GWSI…GAVF), 378-398 (FCFL…TFYA), and 440-460 (WKLI…SSFF). One can recognise an SSD domain in the interval 224–403 (DMAIIGLGYL…FTFYATILCV (180 aa)). Residues 461–617 (YRIMGGFMTN…FKANQAESLT (157 aa)) form a linker region. Positions 571–594 (APKESAAPAPPSSPASVPSAVPVP) are disordered. Over residues 584–594 (PASVPSAVPVP) the composition is skewed to low complexity. A catalytic region spans residues 618 to 1044 (DDELAELCLR…LVNAHMRHNR (427 aa)). Glu-734 serves as the catalytic Charge relay system. Asn-798 carries an N-linked (GlcNAc...) asparagine glycan. Catalysis depends on charge relay system residues Lys-867 and Asp-943. The active-site Proton donor is His-1039. N-linked (GlcNAc...) asparagine glycosylation is present at Asn-1043.

The protein belongs to the HMG-CoA reductase family.

It is found in the endoplasmic reticulum membrane. The catalysed reaction is (R)-mevalonate + 2 NADP(+) + CoA = (3S)-3-hydroxy-3-methylglutaryl-CoA + 2 NADPH + 2 H(+). Its pathway is polyketide biosynthesis; lovastatin biosynthesis. Its function is as follows. HMG-CoA reductase; part of the gene cluster that mediates the biosynthesis of monakolin K, also known as lovastatin, and which acts as a potent competitive inhibitor of HMG-CoA reductase. Monakolin K biosynthesis is performed in two stages. The first stage is catalyzed by the nonaketide synthase mokA, which belongs to type I polyketide synthases and catalyzes the iterative nine-step formation of the polyketide. This PKS stage is completed by the action of dehydrogenase mokE, which catalyzes the NADPH-dependent reduction of the unsaturated tetra-, penta- and heptaketide intermediates that arise during the mokA-mediated biosynthesis of the nonaketide chain and leads to dihydromonacolin L. Covalently bound dihydromonacolin L is released from mokA by the mokD esterase. Conversion of dihydromonacolin L into monacolin L and then monacolin J is subsequently performed with the participation of molecular oxygen and P450 monoogygenase mokC. Finally, mokF performs the conversion of monacoline J to monacoline K through the addition of the side-chain diketide moiety (2R)-2-methylbutanoate produced by the diketide synthase mokB. HMG-CoA reductase mokG may act as a down-regulator of monacolin K production. This is 3-hydroxy-3-methylglutaryl coenzyme A reductase mokG from Monascus pilosus (Red mold).